The chain runs to 425 residues: Pleckstrin homology domain-containing family A member 2 (425 aa).

One can recognise a PH 1 domain in the interval 7-113 (QNRICGFLDI…WVEALNQASK (107 aa)). Residue K141 forms a Glycyl lysine isopeptide (Lys-Gly) (interchain with G-Cter in SUMO2) linkage. S184 is modified (phosphoserine). The region spanning 198 to 298 (PLIKSGYCVK…WIEGIGAAVQ (101 aa)) is the PH 2 domain. Over residues 310–331 (SRSISLTRPGSSTLTSAPNSIL) the composition is skewed to polar residues. Residues 310–425 (SRSISLTRPG…DDENIRTSDV (116 aa)) form a disordered region. 2 positions are modified to phosphoserine: S314 and S349. Composition is skewed to basic and acidic residues over residues 363-375 (AEEK…HAPE) and 400-410 (RSEPQHPKEKP).

Binds MPDZ and PTPN13.

It localises to the cytoplasm. The protein resides in the cell membrane. It is found in the nucleus. In terms of biological role, binds specifically to phosphatidylinositol 3,4-diphosphate (PtdIns3,4P2), but not to other phosphoinositides. May recruit other proteins to the plasma membrane. The sequence is that of Pleckstrin homology domain-containing family A member 2 (Plekha2) from Mus musculus (Mouse).